A 111-amino-acid polypeptide reads, in one-letter code: UPF0060 membrane protein xcc-b100_1273 (111 aa).

The next 4 membrane-spanning stretches (helical) occupy residues Leu-8–Trp-28, Ser-34–Leu-54, Val-62–Asp-82, and Leu-91–Gly-111.

This sequence belongs to the UPF0060 family.

The protein localises to the cell inner membrane. This is UPF0060 membrane protein xcc-b100_1273 from Xanthomonas campestris pv. campestris (strain B100).